The sequence spans 485 residues: Protein nucleotidyltransferase YdiU (485 aa).

Residues G90, G92, R93, K113, D125, G126, R176, and R183 each coordinate ATP. The active-site Proton acceptor is D252. Mg(2+)-binding residues include N253 and D262. Residue D262 coordinates ATP.

This sequence belongs to the SELO family. Mg(2+) is required as a cofactor. Requires Mn(2+) as cofactor.

The catalysed reaction is L-seryl-[protein] + ATP = 3-O-(5'-adenylyl)-L-seryl-[protein] + diphosphate. It catalyses the reaction L-threonyl-[protein] + ATP = 3-O-(5'-adenylyl)-L-threonyl-[protein] + diphosphate. It carries out the reaction L-tyrosyl-[protein] + ATP = O-(5'-adenylyl)-L-tyrosyl-[protein] + diphosphate. The enzyme catalyses L-histidyl-[protein] + UTP = N(tele)-(5'-uridylyl)-L-histidyl-[protein] + diphosphate. The catalysed reaction is L-seryl-[protein] + UTP = O-(5'-uridylyl)-L-seryl-[protein] + diphosphate. It catalyses the reaction L-tyrosyl-[protein] + UTP = O-(5'-uridylyl)-L-tyrosyl-[protein] + diphosphate. Functionally, nucleotidyltransferase involved in the post-translational modification of proteins. It can catalyze the addition of adenosine monophosphate (AMP) or uridine monophosphate (UMP) to a protein, resulting in modifications known as AMPylation and UMPylation. This is Protein nucleotidyltransferase YdiU from Aliivibrio salmonicida (strain LFI1238) (Vibrio salmonicida (strain LFI1238)).